A 424-amino-acid chain; its full sequence is MERPISEAYFQEAKRHIPGGVSSPVRAFKAVGGTPPFLVRGEGAYVWDADGNRYLDYVMSWGPLILGHAHPKVLARVRETLERGLTFGAPSPLEVALAKKVKRAYPFVDLVRFVNSGTEATMSALRLARGYTGRPYIVKFRGNYHGHADGLLVEAGSGALTLGVPSSAGVPEEYAKLTLVLEYNDPEGLREVLKRRGEEIAAIIFEPVVGNAGVLVPTEDFLKALHEAKAYGVLLIADEVMTGFRLAFGGATELLGLKPDLVTLGKILGGGLPAAAYAGRREIMEKVAPLGPVYQAGTLSGNPLAMAAGLATLELLEENPGYYAYLEDLGARLEAGLKEVLKEKGLPHTVNRVGSMITVFFTEGPVVTFQDARRTDTELFKRFFHGLLDRGIYWPPSNFEAAFLSVAHREEDVEKTLEALRKAL.

Lys-266 bears the N6-(pyridoxal phosphate)lysine mark.

This sequence belongs to the class-III pyridoxal-phosphate-dependent aminotransferase family. HemL subfamily. In terms of assembly, homodimer. Pyridoxal 5'-phosphate serves as cofactor.

The protein resides in the cytoplasm. The enzyme catalyses (S)-4-amino-5-oxopentanoate = 5-aminolevulinate. It functions in the pathway porphyrin-containing compound metabolism; protoporphyrin-IX biosynthesis; 5-aminolevulinate from L-glutamyl-tRNA(Glu): step 2/2. In Thermus thermophilus (strain ATCC 27634 / DSM 579 / HB8), this protein is Glutamate-1-semialdehyde 2,1-aminomutase.